We begin with the raw amino-acid sequence, 431 residues long: MIDYQEVLSRYRPTQEEENKLKIISDDIIRKINSICRSRGLRAEAVIVGSYAKGTNLRDGDLDIFIAFDRDYPEEIINTEGLHIGHAVIPNGREKYAEHPYVSGEIGGVKIDVVPCYKMSFGDKKISAVDRTLLHTEYVNGHLDEKGRDEVRLLKIFTKSIGVYGAEARTFGFSGYLCELLVIRFGSFENVIRYFSKAKGRVLIDLDERFRDPMVLIDPVDPDRNVASPVSLESLSRMKIASKMFLSSPDEGFFQIEHNGKNVQYHDRGTCIMIYSLPKPDLTDDVIYPQVYRFRSVLQKIMESHEIRVISSEIDVSDRIYVLIETPACAEERIRVHTGPPVDTDNAVDFVNSWKARDRSRGPYIVADRLYVDVFTGQRSIEDIVRQEIFNYSIGKNLDRFKKSMEIMKFNVGMKSLPVLDKFFGADVFRK.

ATP contacts are provided by Ser50 and Lys53. 2 residues coordinate CTP: Ser50 and Lys53. The Mg(2+) site is built by Asp61, Asp63, and Asp112. Positions 135, 155, and 164 each coordinate ATP. CTP is bound by residues His135, Lys155, and Tyr164.

Belongs to the tRNA nucleotidyltransferase/poly(A) polymerase family. Archaeal CCA-adding enzyme subfamily. Homodimer. Mg(2+) is required as a cofactor.

It carries out the reaction a tRNA precursor + 2 CTP + ATP = a tRNA with a 3' CCA end + 3 diphosphate. The enzyme catalyses a tRNA with a 3' CCA end + 2 CTP + ATP = a tRNA with a 3' CCACCA end + 3 diphosphate. In terms of biological role, catalyzes the addition and repair of the essential 3'-terminal CCA sequence in tRNAs without using a nucleic acid template. Adds these three nucleotides in the order of C, C, and A to the tRNA nucleotide-73, using CTP and ATP as substrates and producing inorganic pyrophosphate. tRNA 3'-terminal CCA addition is required both for tRNA processing and repair. Also involved in tRNA surveillance by mediating tandem CCA addition to generate a CCACCA at the 3' terminus of unstable tRNAs. While stable tRNAs receive only 3'-terminal CCA, unstable tRNAs are marked with CCACCA and rapidly degraded. In Thermoplasma acidophilum (strain ATCC 25905 / DSM 1728 / JCM 9062 / NBRC 15155 / AMRC-C165), this protein is CCA-adding enzyme.